The primary structure comprises 100 residues: Large ribosomal subunit protein bL28 (100 aa).

The protein belongs to the bacterial ribosomal protein bL28 family.

This Ehrlichia chaffeensis (strain ATCC CRL-10679 / Arkansas) protein is Large ribosomal subunit protein bL28.